A 1142-amino-acid chain; its full sequence is Potassium channel subfamily T member 2 (1142 aa).

Residues 1-63 (MVDLESEVPP…KNQRSSLRIR (63 aa)) lie on the Cytoplasmic side of the membrane. Residues 64–84 (LFNFSLKLLSCLLYIIRVLLE) traverse the membrane as a helical segment. The Extracellular portion of the chain corresponds to 85-101 (KPSQGNDWSHIFWVNRS). The N-linked (GlcNAc...) asparagine glycan is linked to Asn99. A helical membrane pass occupies residues 102–122 (LPLWGLQVSVALISLFETILL). Residues 123 to 137 (GYLSYKGNIWEQILR) lie on the Cytoplasmic side of the membrane. Residues 138 to 158 (VPFILEIINAVPFIISIFWPT) form a helical membrane-spanning segment. Over 159–160 (LR) the chain is Extracellular. The helical transmembrane segment at 161-173 (NLFVPVFLNCWLA) threads the bilayer. Topologically, residues 174-198 (KHALENMINDLHRAIQRTQSAMFNQ) are cytoplasmic. Residues 199–219 (VLILISTLLCLIFTCICGIQH) traverse the membrane as a helical segment. Residues 220 to 228 (LERIGKKLN) are Extracellular-facing. An intramembrane region (pore-forming) is located at residues 229 to 249 (LFDSLYFCIVTFSTVGFGDVT). At 250-256 (PETWSSK) the chain is on the extracellular side. A helical transmembrane segment spans residues 257–277 (LFVVAMICVALVVLPIQFEQL). The Cytoplasmic portion of the chain corresponds to 278–1142 (AYLWMERQKS…VQDSREETQL (865 aa)). 2 consecutive RCK N-terminal domains span residues 299–435 (EKHV…DHVV) and 725–865 (NKLI…CYSL). Disordered regions lie at residues 989 to 1044 (DTKD…EKIT) and 1118 to 1142 (PNSEPSRKNSICNAAVQDSREETQL). Positions 1017–1037 (LRRKSMQWARRLSRKGPKHSG) are enriched in basic residues. The segment covering 1118–1129 (PNSEPSRKNSIC) has biased composition (polar residues).

The protein belongs to the potassium channel family. Calcium-activated (TC 1.A.1.3) subfamily. KCa4.2/KCNT2 sub-subfamily. In terms of assembly, homotetramer. Forms heteromer with KCNT1; heteromeric channels differ from those of homomeric channels in their unitary conductance, kinetic behavior, subcellular localization, and response to activation of protein kinase C. In terms of processing, phosphorylated by protein kinase C. Phosphorylation of the C-terminal domain inhibits channel activity. As to expression, detected in brain, and at low levels in heart. Detected in brainstem, including auditory neurons such as the medial nucleus of the trapezoid body. Detected in the olfactory bulb, red nucleus, facial nucleus, pontine nucleus, oculomotor nucleus, substantia nigra, deep cerebellar nuclei, vestibular nucleus, and the thalamus. Detected in hippocampal CA1, CA2, and CA3 regions, the dentate gyrus, supraoptic nucleus, hypothalamus, dorsal root ganglion, and cortical layers II, III, and V. Detected in striatum cholinergic interneurons.

It localises to the cell membrane. It carries out the reaction K(+)(in) = K(+)(out). Its activity is regulated as follows. Are normally in a closed state unless activated by an increase in intracellular Na(+) and Cl(-). Inhibited upon stimulation of G-protein coupled receptors, such as CHRM1 and GRM1. There is conflicting data about the effect of ATP on KNCT2 channels activity. Intracellular ATP was initially report to inhibit the channel activity. However, others studies conclude that KNCT2 channels are not inhibited by intracellular ATP. Functionally, sodium-activated and chloride-activated potassium channel. Produces rapidly activating outward rectifier K(+) currents. Contributes to regulate neuronal excitability. The protein is Potassium channel subfamily T member 2 (Kcnt2) of Rattus norvegicus (Rat).